The primary structure comprises 424 residues: Anaerobic glycerol-3-phosphate dehydrogenase subunit B (424 aa).

It belongs to the anaerobic G-3-P dehydrogenase subunit B family. As to quaternary structure, composed of a catalytic GlpA/B dimer and of membrane bound GlpC. FMN serves as cofactor.

It carries out the reaction a quinone + sn-glycerol 3-phosphate = dihydroxyacetone phosphate + a quinol. The protein operates within polyol metabolism; glycerol degradation via glycerol kinase pathway; glycerone phosphate from sn-glycerol 3-phosphate (anaerobic route): step 1/1. Its function is as follows. Conversion of glycerol 3-phosphate to dihydroxyacetone. Uses fumarate or nitrate as electron acceptor. The protein is Anaerobic glycerol-3-phosphate dehydrogenase subunit B of Yersinia pestis bv. Antiqua (strain Antiqua).